The sequence spans 164 residues: Peptide deformylase-like (164 aa).

Residue glutamate 133 is part of the active site.

The protein belongs to the polypeptide deformylase family.

The sequence is that of Peptide deformylase-like from Agrobacterium fabrum (strain C58 / ATCC 33970) (Agrobacterium tumefaciens (strain C58)).